The primary structure comprises 373 residues: Chaperone protein DnaJ (373 aa).

The J domain maps to 5-70 (CYYEVLEVSR…EKRSRYDRFG (66 aa)). The CR-type zinc finger occupies 134–212 (GTEVELNIPV…CRGAGYVRKQ (79 aa)). Residues cysteine 147, cysteine 150, cysteine 164, cysteine 167, cysteine 186, cysteine 189, cysteine 200, and cysteine 203 each contribute to the Zn(2+) site. CXXCXGXG motif repeat units follow at residues 147–154 (CDTCEGSG), 164–171 (CSHCGGRG), 186–193 (CPACNGRG), and 200–207 (CSECRGAG).

Belongs to the DnaJ family. As to quaternary structure, homodimer. It depends on Zn(2+) as a cofactor.

Its subcellular location is the cytoplasm. Functionally, participates actively in the response to hyperosmotic and heat shock by preventing the aggregation of stress-denatured proteins and by disaggregating proteins, also in an autonomous, DnaK-independent fashion. Unfolded proteins bind initially to DnaJ; upon interaction with the DnaJ-bound protein, DnaK hydrolyzes its bound ATP, resulting in the formation of a stable complex. GrpE releases ADP from DnaK; ATP binding to DnaK triggers the release of the substrate protein, thus completing the reaction cycle. Several rounds of ATP-dependent interactions between DnaJ, DnaK and GrpE are required for fully efficient folding. Also involved, together with DnaK and GrpE, in the DNA replication of plasmids through activation of initiation proteins. In Maridesulfovibrio salexigens (strain ATCC 14822 / DSM 2638 / NCIMB 8403 / VKM B-1763) (Desulfovibrio salexigens), this protein is Chaperone protein DnaJ.